The primary structure comprises 488 residues: 3-octaprenyl-4-hydroxybenzoate carboxy-lyase (488 aa).

Position 172 (Asn-172) interacts with Mn(2+). Prenylated FMN contacts are provided by residues Ile-175–Arg-177, Arg-189–Leu-191, and Arg-194–Gly-195. Glu-238 lines the Mn(2+) pocket. Catalysis depends on Asp-287, which acts as the Proton donor.

This sequence belongs to the UbiD family. Homohexamer. Prenylated FMN is required as a cofactor. Requires Mn(2+) as cofactor.

The protein localises to the cell membrane. The enzyme catalyses a 4-hydroxy-3-(all-trans-polyprenyl)benzoate + H(+) = a 2-(all-trans-polyprenyl)phenol + CO2. It participates in cofactor biosynthesis; ubiquinone biosynthesis. Catalyzes the decarboxylation of 3-octaprenyl-4-hydroxy benzoate to 2-octaprenylphenol, an intermediate step in ubiquinone biosynthesis. In Pseudomonas putida (strain ATCC 47054 / DSM 6125 / CFBP 8728 / NCIMB 11950 / KT2440), this protein is 3-octaprenyl-4-hydroxybenzoate carboxy-lyase.